The sequence spans 375 residues: Queuine tRNA-ribosyltransferase (375 aa).

D90 serves as the catalytic Proton acceptor. Residues 90 to 94 (DSGGF), D144, Q190, and G217 contribute to the substrate site. Positions 248–254 (GIGTPHY) are RNA binding. Catalysis depends on D267, which acts as the Nucleophile. An RNA binding; important for wobble base 34 recognition region spans residues 272–276 (ARITR). Positions 305, 307, 310, and 336 each coordinate Zn(2+).

This sequence belongs to the queuine tRNA-ribosyltransferase family. Homodimer. Within each dimer, one monomer is responsible for RNA recognition and catalysis, while the other monomer binds to the replacement base PreQ1. The cofactor is Zn(2+).

It carries out the reaction 7-aminomethyl-7-carbaguanine + guanosine(34) in tRNA = 7-aminomethyl-7-carbaguanosine(34) in tRNA + guanine. The protein operates within tRNA modification; tRNA-queuosine biosynthesis. In terms of biological role, catalyzes the base-exchange of a guanine (G) residue with the queuine precursor 7-aminomethyl-7-deazaguanine (PreQ1) at position 34 (anticodon wobble position) in tRNAs with GU(N) anticodons (tRNA-Asp, -Asn, -His and -Tyr). Catalysis occurs through a double-displacement mechanism. The nucleophile active site attacks the C1' of nucleotide 34 to detach the guanine base from the RNA, forming a covalent enzyme-RNA intermediate. The proton acceptor active site deprotonates the incoming PreQ1, allowing a nucleophilic attack on the C1' of the ribose to form the product. After dissociation, two additional enzymatic reactions on the tRNA convert PreQ1 to queuine (Q), resulting in the hypermodified nucleoside queuosine (7-(((4,5-cis-dihydroxy-2-cyclopenten-1-yl)amino)methyl)-7-deazaguanosine). The chain is Queuine tRNA-ribosyltransferase from Borreliella burgdorferi (strain ATCC 35210 / DSM 4680 / CIP 102532 / B31) (Borrelia burgdorferi).